A 161-amino-acid polypeptide reads, in one-letter code: MVRPQSAAEFDKKKVVAENRRARFDYAIEQVFEAGIALQGTEVKSLRFGEGTIAESYAEVNGGEVWLINANIPEFSHGNRFNHEPKRPRKLLLNWREINKLHAGVARQGMTLVPLSVYFNSRGRAKVELALAKGKKAHDKRESIKERDWKRDKQRLLKDRG.

Residues 140 to 161 (KRESIKERDWKRDKQRLLKDRG) form a disordered region.

Belongs to the SmpB family.

Its subcellular location is the cytoplasm. Its function is as follows. Required for rescue of stalled ribosomes mediated by trans-translation. Binds to transfer-messenger RNA (tmRNA), required for stable association of tmRNA with ribosomes. tmRNA and SmpB together mimic tRNA shape, replacing the anticodon stem-loop with SmpB. tmRNA is encoded by the ssrA gene; the 2 termini fold to resemble tRNA(Ala) and it encodes a 'tag peptide', a short internal open reading frame. During trans-translation Ala-aminoacylated tmRNA acts like a tRNA, entering the A-site of stalled ribosomes, displacing the stalled mRNA. The ribosome then switches to translate the ORF on the tmRNA; the nascent peptide is terminated with the 'tag peptide' encoded by the tmRNA and targeted for degradation. The ribosome is freed to recommence translation, which seems to be the essential function of trans-translation. The sequence is that of SsrA-binding protein from Sphingopyxis alaskensis (strain DSM 13593 / LMG 18877 / RB2256) (Sphingomonas alaskensis).